The primary structure comprises 646 residues: UvrABC system protein B (646 aa).

Positions 29 to 411 (LEKNPEKSKQ…SNQVVEQIIR (383 aa)) constitute a Helicase ATP-binding domain. 42-49 (GVTGSGKT) is a binding site for ATP. Positions 95–118 (YYDYYQPESYIPQKDQYIEKDAQI) match the Beta-hairpin motif. A Helicase C-terminal domain is found at 428–590 (QVEDIIKETE…ITPQTIVKPI (163 aa)). A UVR domain is found at 609–644 (PNVIVELEAEMYEAAEALEFEKAIKIRDTIAKLKKK).

This sequence belongs to the UvrB family. Forms a heterotetramer with UvrA during the search for lesions. Interacts with UvrC in an incision complex.

The protein resides in the cytoplasm. Functionally, the UvrABC repair system catalyzes the recognition and processing of DNA lesions. A damage recognition complex composed of 2 UvrA and 2 UvrB subunits scans DNA for abnormalities. Upon binding of the UvrA(2)B(2) complex to a putative damaged site, the DNA wraps around one UvrB monomer. DNA wrap is dependent on ATP binding by UvrB and probably causes local melting of the DNA helix, facilitating insertion of UvrB beta-hairpin between the DNA strands. Then UvrB probes one DNA strand for the presence of a lesion. If a lesion is found the UvrA subunits dissociate and the UvrB-DNA preincision complex is formed. This complex is subsequently bound by UvrC and the second UvrB is released. If no lesion is found, the DNA wraps around the other UvrB subunit that will check the other stand for damage. This is UvrABC system protein B from Methanococcus maripaludis (strain DSM 14266 / JCM 13030 / NBRC 101832 / S2 / LL).